Consider the following 88-residue polypeptide: ATPase inhibitor mai-1, mitochondrial (88 aa).

The segment covering M1–G18 has biased composition (gly residues). Residues M1 to R41 are disordered. Positions F39–G87 form a coiled coil.

This sequence belongs to the ATPase inhibitor family. In terms of processing, does not seem to include a transit peptide.

The protein localises to the mitochondrion. Thought to be a regulatory component of the ATP-synthesizing complex in the mitochondria. This chain is ATPase inhibitor mai-1, mitochondrial (mai-1), found in Caenorhabditis elegans.